Here is a 686-residue protein sequence, read N- to C-terminus: Translation initiation factor IF-2 (686 aa).

Residues 53–105 are disordered; that stretch reads EKPSVADEFEVEEKVVRSKKNSNKKKKKGKGNEDKRQENFAGRQQTQTVETPD. The span at 69-81 shows a compositional bias: basic residues; that stretch reads RSKKNSNKKKKKG. The tr-type G domain maps to 188 to 357; the sequence is ERPAVVTIMG…LLVSEVEEYK (170 aa). The segment at 197 to 204 is G1; sequence GHVDHGKT. 197–204 contacts GTP; the sequence is GHVDHGKT. The tract at residues 222 to 226 is G2; that stretch reads GITQH. A G3 region spans residues 243–246; that stretch reads DTPG. GTP-binding positions include 243 to 247 and 297 to 300; these read DTPGH and NKMD. The tract at residues 297 to 300 is G4; sequence NKMD. Residues 333–335 form a G5 region; sequence SAI.

This sequence belongs to the TRAFAC class translation factor GTPase superfamily. Classic translation factor GTPase family. IF-2 subfamily.

It is found in the cytoplasm. Its function is as follows. One of the essential components for the initiation of protein synthesis. Protects formylmethionyl-tRNA from spontaneous hydrolysis and promotes its binding to the 30S ribosomal subunits. Also involved in the hydrolysis of GTP during the formation of the 70S ribosomal complex. The protein is Translation initiation factor IF-2 of Bacillus cereus (strain ATCC 10987 / NRS 248).